Consider the following 101-residue polypeptide: Large ribosomal subunit protein bL21 (101 aa).

The protein belongs to the bacterial ribosomal protein bL21 family. In terms of assembly, part of the 50S ribosomal subunit. Contacts protein L20.

In terms of biological role, this protein binds to 23S rRNA in the presence of protein L20. The polypeptide is Large ribosomal subunit protein bL21 (Magnetococcus marinus (strain ATCC BAA-1437 / JCM 17883 / MC-1)).